Consider the following 610-residue polypeptide: tRNA uridine 5-carboxymethylaminomethyl modification enzyme MnmG (610 aa).

Residue 14 to 19 participates in FAD binding; the sequence is GAGHAG. 274-288 contributes to the NAD(+) binding site; the sequence is GPRYCPSIEDKIVKF.

This sequence belongs to the MnmG family. In terms of assembly, homodimer. Heterotetramer of two MnmE and two MnmG subunits. FAD serves as cofactor.

Its subcellular location is the cytoplasm. In terms of biological role, NAD-binding protein involved in the addition of a carboxymethylaminomethyl (cmnm) group at the wobble position (U34) of certain tRNAs, forming tRNA-cmnm(5)s(2)U34. This chain is tRNA uridine 5-carboxymethylaminomethyl modification enzyme MnmG, found in Chlamydia trachomatis serovar D (strain ATCC VR-885 / DSM 19411 / UW-3/Cx).